Consider the following 125-residue polypeptide: Small ribosomal subunit protein uS12m (125 aa).

A disordered region spans residues 1–27; the sequence is MPTKNQLIRHGREEKRRTDRTRALDQC. The segment covering 10 to 23 has biased composition (basic and acidic residues); the sequence is HGREEKRRTDRTRA.

The protein belongs to the universal ribosomal protein uS12 family.

The protein localises to the mitochondrion. Functionally, protein S12 is involved in the translation initiation step. This Triticum aestivum (Wheat) protein is Small ribosomal subunit protein uS12m (RPS12).